The sequence spans 316 residues: tRNA dimethylallyltransferase (316 aa).

Glycine 17 to threonine 24 lines the ATP pocket. Threonine 19–threonine 24 is a binding site for substrate. 4 interaction with substrate tRNA regions span residues aspartate 42–leucine 45, glutamine 166–arginine 170, arginine 247–arginine 252, and lysine 280–arginine 287.

The protein belongs to the IPP transferase family. As to quaternary structure, monomer. The cofactor is Mg(2+).

The enzyme catalyses adenosine(37) in tRNA + dimethylallyl diphosphate = N(6)-dimethylallyladenosine(37) in tRNA + diphosphate. Its function is as follows. Catalyzes the transfer of a dimethylallyl group onto the adenine at position 37 in tRNAs that read codons beginning with uridine, leading to the formation of N6-(dimethylallyl)adenosine (i(6)A). The sequence is that of tRNA dimethylallyltransferase from Shigella flexneri.